The sequence spans 280 residues: MILKSGLYIVSTPIGNFEDITLRAISTLKNSDIILCEDTRISQKLLAKHYIHTKLQIYNDHSDYKDREYIISLIKAGNVVSLISDAGTPLISDPGYKLVRDLRNLNYYIEVVPGVSSPITALTLSSLPTDRFLFSGFLPKTIESKKKIFAELVNLKATLIFFDTASRLINTLLLAKEIFGNREICVARELTKIYQETKTGDIDEIIEFYKNNILKGEIVLLISGNVQVQNKQINLEKFIEFCLSKNLSSKTIIELAYDKFKDVYSKKEIYSVVHKKKFTA.

The protein belongs to the methyltransferase superfamily. RsmI family.

It localises to the cytoplasm. The catalysed reaction is cytidine(1402) in 16S rRNA + S-adenosyl-L-methionine = 2'-O-methylcytidine(1402) in 16S rRNA + S-adenosyl-L-homocysteine + H(+). Catalyzes the 2'-O-methylation of the ribose of cytidine 1402 (C1402) in 16S rRNA. The sequence is that of Ribosomal RNA small subunit methyltransferase I from Rickettsia prowazekii (strain Madrid E).